The sequence spans 513 residues: ATP synthase subunit alpha (513 aa).

169 to 176 (GDRQIGKT) contacts ATP.

This sequence belongs to the ATPase alpha/beta chains family. In terms of assembly, F-type ATPases have 2 components, CF(1) - the catalytic core - and CF(0) - the membrane proton channel. CF(1) has five subunits: alpha(3), beta(3), gamma(1), delta(1), epsilon(1). CF(0) has three main subunits: a(1), b(2) and c(9-12). The alpha and beta chains form an alternating ring which encloses part of the gamma chain. CF(1) is attached to CF(0) by a central stalk formed by the gamma and epsilon chains, while a peripheral stalk is formed by the delta and b chains.

It is found in the cell inner membrane. The catalysed reaction is ATP + H2O + 4 H(+)(in) = ADP + phosphate + 5 H(+)(out). Functionally, produces ATP from ADP in the presence of a proton gradient across the membrane. The alpha chain is a regulatory subunit. This chain is ATP synthase subunit alpha, found in Francisella tularensis subsp. tularensis (strain WY96-3418).